Here is a 388-residue protein sequence, read N- to C-terminus: Na(+)/H(+) antiporter NhaA (388 aa).

The next 11 membrane-spanning stretches (helical) occupy residues 14-34, 59-79, 95-115, 125-145, 154-174, 179-199, 219-239, 254-274, 292-312, 328-348, and 360-380; these read GGIILIIAAALAMLMANMGAT, MLLWINDALMAVFFLLIGLEV, AFPVIAAIGGMIVPALLYLAF, GWAIPAATDIAFALGVLALLG, IFLMALAIIDDLGAIVIIALF, LSIVSLGVAAFAIAVLALLNL, VLKSGVHATLAGVIVGFFIPL, VLHPWVAYLILPLFAFANAGV, IIAGLLIGKPLGISLFCWLAL, IMAVGILCGIGFTMSIFIASL, and WAKLGILIGSLLSAVVGYSWL.

Belongs to the NhaA Na(+)/H(+) (TC 2.A.33) antiporter family.

It localises to the cell inner membrane. It catalyses the reaction Na(+)(in) + 2 H(+)(out) = Na(+)(out) + 2 H(+)(in). Its function is as follows. Na(+)/H(+) antiporter that extrudes sodium in exchange for external protons. In Salmonella choleraesuis (strain SC-B67), this protein is Na(+)/H(+) antiporter NhaA.